The following is a 72-amino-acid chain: Translational regulator CsrA (72 aa).

This sequence belongs to the CsrA/RsmA family. As to quaternary structure, homodimer; the beta-strands of each monomer intercalate to form a hydrophobic core, while the alpha-helices form wings that extend away from the core.

It is found in the cytoplasm. Its function is as follows. A translational regulator that binds mRNA to regulate translation initiation and/or mRNA stability. Usually binds in the 5'-UTR at or near the Shine-Dalgarno sequence preventing ribosome-binding, thus repressing translation. Its main target seems to be the major flagellin gene, while its function is anatagonized by FliW. In Clostridium botulinum (strain ATCC 19397 / Type A), this protein is Translational regulator CsrA.